The chain runs to 215 residues: Large ribosomal subunit protein uL1 (215 aa).

The protein belongs to the universal ribosomal protein uL1 family. Part of the 50S ribosomal subunit.

In terms of biological role, binds directly to 23S rRNA. Probably involved in E site tRNA release. Protein L1 is also a translational repressor protein, it controls the translation of its operon by binding to its mRNA. The polypeptide is Large ribosomal subunit protein uL1 (Cenarchaeum symbiosum (strain A)).